A 438-amino-acid chain; its full sequence is Coenzyme A disulfide reductase (438 aa).

8 to 33 serves as a coordination point for FAD; sequence GAVAGGATCASQIRRLDKESDIIIFE. The substrate site is built by threonine 15, glutamine 19, arginine 22, serine 39, and asparagine 42. The active-site Nucleophile is the cysteine 43. The active-site Redox-active is cysteine 43. Lysine 71 provides a ligand contact to substrate. Residue 151-166 participates in NADP(+) binding; that stretch reads VLVVGAGYVSLEVLEN. 267-277 contributes to the FAD binding site; the sequence is TNVPNIYAIGD. Histidine 299 serves as a coordination point for substrate. Residue tyrosine 419 coordinates FAD. Position 427 (lysine 427) interacts with substrate.

It belongs to the class-III pyridine nucleotide-disulfide oxidoreductase family. As to quaternary structure, homodimer. FAD serves as cofactor.

It catalyses the reaction NADP(+) + 2 CoA = CoA-disulfide + NADPH + H(+). In terms of biological role, catalyzes specifically the NADPH-dependent reduction of coenzyme A disulfide. The sequence is that of Coenzyme A disulfide reductase from Staphylococcus aureus (strain bovine RF122 / ET3-1).